The sequence spans 115 residues: Double-headed protease inhibitor, submandibular gland (115 aa).

2 Kazal-like domains span residues 6 to 66 and 67 to 115; these read IGRE…ACDI and ECTE…HGEC. Cystine bridges form between C12–C46, C24–C43, C32–C64, C68–C97, C75–C94, and C83–C115.

Its subcellular location is the secreted. Its function is as follows. This inhibitor is composed of two homologous actively inhibiting halves: one which inhibits trypsin, the other which inhibits elastase. The protein is Double-headed protease inhibitor, submandibular gland of Vulpes vulpes (Red fox).